A 544-amino-acid polypeptide reads, in one-letter code: Probable protein kinase UbiB (544 aa).

In terms of domain architecture, Protein kinase spans 123 to 500 (DFDEKALASA…RNKQRKSQYL (378 aa)). ATP-binding positions include 129-137 (LASASIAQV) and Lys-152. The active-site Proton acceptor is Asp-286. Transmembrane regions (helical) follow at residues 499–519 (YLLGIGATLILCGSLFFISAS) and 522–542 (MAIAFMSAGALSWIIGWYKSG).

The protein belongs to the ABC1 family. UbiB subfamily.

It localises to the cell inner membrane. The protein operates within cofactor biosynthesis; ubiquinone biosynthesis [regulation]. Is probably a protein kinase regulator of UbiI activity which is involved in aerobic coenzyme Q (ubiquinone) biosynthesis. Required for the expression of 2'-N-acetyltransferase. This is Probable protein kinase UbiB from Providencia stuartii.